Here is a 227-residue protein sequence, read N- to C-terminus: Large ribosomal subunit protein uL3 (227 aa).

Q151 carries the N5-methylglutamine modification.

It belongs to the universal ribosomal protein uL3 family. In terms of assembly, part of the 50S ribosomal subunit. Forms a cluster with proteins L14 and L19. In terms of processing, methylated by PrmB.

Functionally, one of the primary rRNA binding proteins, it binds directly near the 3'-end of the 23S rRNA, where it nucleates assembly of the 50S subunit. This Gluconobacter oxydans (strain 621H) (Gluconobacter suboxydans) protein is Large ribosomal subunit protein uL3.